The following is a 537-amino-acid chain: Putative cysteine ligase BshC (537 aa).

A coiled-coil region spans residues I422–I450.

It belongs to the BshC family.

Involved in bacillithiol (BSH) biosynthesis. May catalyze the last step of the pathway, the addition of cysteine to glucosamine malate (GlcN-Mal) to generate BSH. The chain is Putative cysteine ligase BshC from Staphylococcus aureus (strain bovine RF122 / ET3-1).